The sequence spans 687 residues: A-kinase anchor protein 8 (687 aa).

An interaction with MCM2 region spans residues 1–195 (MEQSYGGYGA…FLRGRGQGRF (195 aa)). Positions 1 to 210 (MEQSYGGYGA…SSTFIRSDPF (210 aa)) are interaction with DPY30. Serine 72 carries the post-translational modification Phosphoserine. Positions 104–124 (SKEGGRGGISSGGEGMQDRDS) are disordered. Arginine 109 bears the Asymmetric dimethylarginine; alternate mark. An Omega-N-methylarginine; alternate modification is found at arginine 109. The segment covering 109–118 (RGGISSGGEG) has biased composition (gly residues). Residues 109-201 (RGGISSGGEG…QGRFQDRSNS (93 aa)) are interaction with DDX5. Residues 127 to 152 (RFQPYESYDSRPCMPEHTPYRPSYSY) form a nuclear matrix targeting site region. Residues 189–221 (GRGQGRFQDRSNSSTFIRSDPFMPPSASSEPLS) are disordered. Residue serine 199 is modified to Phosphoserine. Residues arginine 233 and arginine 277 each carry the omega-N-methylarginine modification. Residues 278 to 380 (SQTRIRDWPR…KQRRRDRMRD (103 aa)) are disordered. Composition is skewed to basic and acidic residues over residues 281–295 (RIRD…ERFG) and 312–321 (PDAKLARADS). Positions 287 to 304 (RRRGFERFGPDNMGRKRK) match the Bipartite nuclear localization signal motif. Lysine 315 is covalently cross-linked (Glycyl lysine isopeptide (Lys-Gly) (interchain with G-Cter in SUMO2)). Phosphoserine occurs at positions 321, 326, and 337. Positions 322–332 (EGDLSENDDGA) are enriched in acidic residues. Positions 336-358 (RSGDEEFRGEDDLCDSRKQRGEK) are enriched in basic and acidic residues. Residues 385–448 (RIQFACSVCK…NKKIEKRRQE (64 aa)) form an involved in chromatin-binding region. C2H2 AKAP95-type zinc fingers lie at residues 390-412 (CSVC…SKFH) and 479-502 (CLAC…SVDH). Residues 523 to 565 (SVLNNKHIVKMLEKYLKGEDPFVNETADLETEGDENLGEEKET) are involved in condensin complex recruitment. Threonine 553 carries the phosphothreonine modification. A Glycyl lysine isopeptide (Lys-Gly) (interchain with G-Cter in SUMO2) cross-link involves residue lysine 563. Residues 568–585 (EVAAEVLAEVITAAVKAV) form an RII-binding region. Residues 572 to 589 (EVLAEVITAAVKAVEGDG) are required for interaction with MYCBP. Residues 606 to 687 (VDTAEAGSDS…DAEAKDTPTE (82 aa)) form a disordered region. Residues 633-648 (RNMEDMARGEAAEARN) show a composition bias toward basic and acidic residues. Positions 649 to 666 (EAAVPAAAAGSPVPVIAI) are enriched in low complexity. Serine 659 is subject to Phosphoserine.

Belongs to the AKAP95 family. As to quaternary structure, binds to dimeric RII-alpha regulatory subunit of PKA during mitosis. Interacts (via C-terminus) with FIGN. Interacts with NCAPD2, CCND1, CCND3, MCM2, RPS6KA1, PDE4A, CASP3. Interacts with DDX5, CCNE1. Interacts with NFKB1; detetcted in the cytoplasm. Interacts with MYCBP; MYCBP is translocated to the nucleus and the interaction prevents the association of the PKA catalytic subunit leading to suppression of PKA activity. Interacts with DPY30; mediating AKAP8 association with at least the MLL4/WBP7 HMT complex. Interacts with HDAC3; increased during mitosis. Interacts with GJA1; in the nucleus and in the nuclear membrane; the nuclear association increases with progress of cell cycle G1, S and G2 phase and decreases in M phase. Post-translationally, phosphorylated on tyrosine residues probably by SRC subfamily protein kinases; multiple phosphorylation is leading to dissociation from nuclear structures implicated in chromatin structural changes. As to expression, widely expressed. The protein has been detected in liver, fibroblasts, granulosa, myoblast, lymphoma and Sertoli cells.

It localises to the nucleus matrix. It is found in the nucleus. The protein localises to the nucleolus. Its subcellular location is the cytoplasm. Its function is as follows. Anchoring protein that mediates the subcellular compartmentation of cAMP-dependent protein kinase (PKA type II). Acts as an anchor for a PKA-signaling complex onto mitotic chromosomes, which is required for maintenance of chromosomes in a condensed form throughout mitosis. Recruits condensin complex subunit NCAPD2 to chromosomes required for chromatin condensation; the function appears to be independent from PKA-anchoring. May help to deliver cyclin D/E to CDK4 to facilitate cell cycle progression. Required for cell cycle G2/M transition and histone deacetylation during mitosis. In mitotic cells recruits HDAC3 to the vicinity of chromatin leading to deacetylation and subsequent phosphorylation at 'Ser-10' of histone H3; in this function may act redundantly with AKAP8L. Involved in nuclear retention of RPS6KA1 upon ERK activation thus inducing cell proliferation. May be involved in regulation of DNA replication by acting as scaffold for MCM2. Enhances HMT activity of the KMT2 family MLL4/WBP7 complex and is involved in transcriptional regulation. In a teratocarcinoma cell line is involved in retinoic acid-mediated induction of developmental genes implicating H3 'Lys-4' methylation. May be involved in recruitment of active CASP3 to the nucleus in apoptotic cells. May act as a carrier protein of GJA1 for its transport to the nucleus. May play a repressive role in the regulation of rDNA transcription. Preferentially binds GC-rich DNA in vitro. In cells, associates with ribosomal RNA (rRNA) chromatin, preferentially with rRNA promoter and transcribed regions. Involved in modulation of Toll-like receptor signaling. Required for the cAMP-dependent suppression of TNF-alpha in early stages of LPS-induced macrophage activation; the function probably implicates targeting of PKA to NFKB1. The protein is A-kinase anchor protein 8 (Akap8) of Rattus norvegicus (Rat).